A 108-amino-acid chain; its full sequence is UPF0060 membrane protein SA2130 (108 aa).

Helical transmembrane passes span 5 to 25 (IFIF…IWLW), 31 to 51 (SSLV…IATF), 60 to 80 (VYAA…MVVD), and 86 to 106 (KYDV…LLPS).

Belongs to the UPF0060 family.

Its subcellular location is the cell membrane. The chain is UPF0060 membrane protein SA2130 from Staphylococcus aureus (strain N315).